Here is a 171-residue protein sequence, read N- to C-terminus: Peptidyl-prolyl cis-trans isomerase (171 aa).

The region spanning 7-170 (FFDLTIGGAP…KPVVIADCGQ (164 aa)) is the PPIase cyclophilin-type domain.

Belongs to the cyclophilin-type PPIase family. Expressed in leaves, floral buds, growing shoots and stamens at anthesis.

It is found in the cytoplasm. The enzyme catalyses [protein]-peptidylproline (omega=180) = [protein]-peptidylproline (omega=0). Binds cyclosporin A (CsA). CsA mediates some of its effects via an inhibitory action on PPIase. Its function is as follows. PPIases accelerate the folding of proteins. It catalyzes the cis-trans isomerization of proline imidic peptide bonds in oligopeptides. The chain is Peptidyl-prolyl cis-trans isomerase from Solanum lycopersicum (Tomato).